Reading from the N-terminus, the 153-residue chain is Transcriptional repressor NrdR (153 aa).

A zinc finger spans residues 3 to 34; it reads CPSCFHNGTRVLDSRPVDEGRSIRRRRECESC. Residues 49–139 enclose the ATP-cone domain; that stretch reads LIVVKKEGTR…VYRQFKDLNV (91 aa).

The protein belongs to the NrdR family. The cofactor is Zn(2+).

Negatively regulates transcription of bacterial ribonucleotide reductase nrd genes and operons by binding to NrdR-boxes. This chain is Transcriptional repressor NrdR, found in Bacillus cytotoxicus (strain DSM 22905 / CIP 110041 / 391-98 / NVH 391-98).